The primary structure comprises 506 residues: Lysine--tRNA ligase (506 aa).

Mg(2+) is bound by residues E416 and E423.

Belongs to the class-II aminoacyl-tRNA synthetase family. Homodimer. Mg(2+) serves as cofactor.

It localises to the cytoplasm. It carries out the reaction tRNA(Lys) + L-lysine + ATP = L-lysyl-tRNA(Lys) + AMP + diphosphate. The protein is Lysine--tRNA ligase of Xylella fastidiosa (strain M23).